A 345-amino-acid polypeptide reads, in one-letter code: Annexin A9 (345 aa).

4 Annexin repeats span residues 41 to 112 (FSAD…ALLQ), 113 to 184 (PAAH…ALAK), 197 to 266 (NLAA…NLAS), and 270 to 341 (NTPL…ALCR).

Belongs to the annexin family. In terms of assembly, homodimer.

In terms of biological role, may act as a low affinity receptor for acetylcholine. In Bos taurus (Bovine), this protein is Annexin A9 (ANXA9).